Reading from the N-terminus, the 172-residue chain is MRILCDACESAAAIVFCAADEAALCCSCDEKVHKCNKLASRHLRVGLADPSNAPSCDICENAPAFFYCEIDGSSLCLQCDMVVHVGGKRTHRRFLLLRQRIEFPGDKPNHADQLGLRCQKASSGRGQESNGNGDHDHNMIDLNSNPQRVHEPGSHNQEEGIDVNNANNHEHE.

Residues Cys5, Cys8, Cys28, His33, Cys56, Cys59, Cys79, and His84 each contribute to the Zn(2+) site. The segment at 5–47 adopts a B box-type 1; atypical zinc-finger fold; the sequence is CDACESAAAIVFCAADEAALCCSCDEKVHKCNKLASRHLRVGL. The segment at 56–96 adopts a B box-type 2; atypical zinc-finger fold; the sequence is CDICENAPAFFYCEIDGSSLCLQCDMVVHVGGKRTHRRFLL. A disordered region spans residues 119–172; it reads QKASSGRGQESNGNGDHDHNMIDLNSNPQRVHEPGSHNQEEGIDVNNANNHEHE. Residues 120 to 132 are compositionally biased toward polar residues; that stretch reads KASSGRGQESNGN. Over residues 148–158 the composition is skewed to basic and acidic residues; that stretch reads RVHEPGSHNQE.

As to expression, expressed in vasculature of leaves and petioles.

Its subcellular location is the nucleus. Its function is as follows. Acts as a negative regulator of seedling photomorphogenesis. Acts as a negative regulator of blue light-mediated inhibition of hypocotyl elongation through increase of bioactive gibberellin levels. Acts as a repressor of thermotolerance by modulating expression of a set of heat shock-responsive genes. In Arabidopsis thaliana (Mouse-ear cress), this protein is B-box zinc finger protein 18.